Consider the following 540-residue polypeptide: Protein PALS2 (540 aa).

2 L27 domains span residues 1–48 (MQQV…EDSK) and 49–107 (LEAV…YDSP). Positions 130–209 (ILGIHKRAGE…SVTLKILPSY (80 aa)) constitute a PDZ domain. In terms of domain architecture, SH3 spans 215-284 (PQQVFVKCHF…PSQFLEEKRK (70 aa)). In terms of domain architecture, Guanylate kinase-like spans 338 to 525 (RKTLVLIGAQ…AFEKLQTAIE (188 aa)). Tyr500 bears the Phosphotyrosine mark.

Belongs to the MAGUK family. As to quaternary structure, interacts with CADM1. Interacts with the LIN7 proteins. In terms of tissue distribution, abundant in testis, brain, and kidney with lower levels detectable in other tissues.

Its subcellular location is the membrane. In Homo sapiens (Human), this protein is Protein PALS2.